Reading from the N-terminus, the 462-residue chain is Cysteine--tRNA ligase (462 aa).

Cys29 contacts Zn(2+). A 'HIGH' region motif is present at residues 31–41; the sequence is PTVYDHAHIGN. The Zn(2+) site is built by Cys214, His239, and Glu243. The 'KMSKS' region motif lies at 272-276; the sequence is KMSKS. Lys275 contributes to the ATP binding site.

This sequence belongs to the class-I aminoacyl-tRNA synthetase family. In terms of assembly, monomer. The cofactor is Zn(2+).

The protein localises to the cytoplasm. It catalyses the reaction tRNA(Cys) + L-cysteine + ATP = L-cysteinyl-tRNA(Cys) + AMP + diphosphate. The sequence is that of Cysteine--tRNA ligase from Azorhizobium caulinodans (strain ATCC 43989 / DSM 5975 / JCM 20966 / LMG 6465 / NBRC 14845 / NCIMB 13405 / ORS 571).